The following is a 140-amino-acid chain: Probable glycine cleavage system H protein (140 aa).

The 93-residue stretch at 22-114 (RAIIGITSYA…YEEGWIVVLE (93 aa)) folds into the Lipoyl-binding domain. The residue at position 63 (Lys-63) is an N6-lipoyllysine.

This sequence belongs to the GcvH family. In terms of assembly, the glycine cleavage system is composed of four proteins: P, T, L and H. Requires (R)-lipoate as cofactor.

Functionally, the glycine cleavage system catalyzes the degradation of glycine. The H protein shuttles the methylamine group of glycine from the P protein to the T protein. The polypeptide is Probable glycine cleavage system H protein (Korarchaeum cryptofilum (strain OPF8)).